The primary structure comprises 383 residues: Insecticidal crystal protein Cry35Ab1 (383 aa).

A Ricin B-type lectin domain is found at 26 to 138 (DDSGVSLMNK…NNPNQQWNLT (113 aa)).

This sequence belongs to the toxin_10 family. As to quaternary structure, monomer in solution. Copurifies from parasporal inclusion bodies with Cry34Ab1. Proteolytic processing occurs near the C-terminus yielding a stable protein of approximately 40 kDa; this may be the active form of the protein.

Its function is as follows. Component of a binary insecticidal toxin active on western corn rootworm (WCR, Diabrotica virgifera subsp. virgifera Le Conte) and probably also on northern corn rootworm (D.barberi). Both proteins are required for maximal toxicity. The larval midgut epithelium is probably the primary target. This protein alone has no activity against southern corn rootworm (Diabrotica undecimpunctata howardi Barber), but it synergizes the toxic effect of its Cry34Ab1 partner. The 2 proteins individually and together form ion channels; channels made in the presence of the 2 proteins have higher conductance. Binds to WCR third instar midgut brush border membrane vesicles; binding improves over 10-fold in the presence of Cry34Ab1. The sequence is that of Insecticidal crystal protein Cry35Ab1 from Bacillus thuringiensis.